A 650-amino-acid polypeptide reads, in one-letter code: Phosphatidylinositol 4-kinase gamma 7 (650 aa).

The 58-residue stretch at 46–103 (RRVFVQTETGCVLGMELDRSDNVHTVKRRLQIALNFPTEESSLTYGDMVLTNDLSAVR) folds into the Ubiquitin-like; degenerate domain. A PI3K/PI4K catalytic domain is found at 166–463 (GVEPLPVHSG…SVTERDVFSP (298 aa)). The interval 172–178 (VHSGLGG) is G-loop. Residues 173 to 179 (HSGLGGA), K194, and 283 to 286 (QKFV) each bind ATP. Residues 316–324 (FNTDRHGGN) form a catalytic loop region. The interval 343 to 369 (PIDHGLCLPETLEDPYFEWIHWPQASL) is activation loop. D345 lines the ATP pocket. Disordered regions lie at residues 508 to 534 (SLGKLEESIKEEEEDEEEEEDKTENTV) and 560 to 595 (STSMKNTHLSDTTRKNPKPLTRGKSENTSSGHKSAN). Residues 516-529 (IKEEEEDEEEEEDK) show a composition bias toward acidic residues. Polar residues-rich tracts occupy residues 560-569 (STSMKNTHLS) and 585-595 (ENTSSGHKSAN). S593 bears the Phosphoserine mark.

This sequence belongs to the PI3/PI4-kinase family. Type II PI4K subfamily.

It catalyses the reaction a 1,2-diacyl-sn-glycero-3-phospho-(1D-myo-inositol) + ATP = a 1,2-diacyl-sn-glycero-3-phospho-(1D-myo-inositol 4-phosphate) + ADP + H(+). Its function is as follows. The phosphorylation of phosphatidylinositol (PI) to PI4P is the first committed step in the generation of phosphatidylinositol 4,5-bisphosphate (PIP2), a precursor of the second messenger inositol 1,4,5-trisphosphate (InsP3). Undergoes autophosphorylation and phosphorylates serine/threonine residues of protein substrates. The sequence is that of Phosphatidylinositol 4-kinase gamma 7 from Arabidopsis thaliana (Mouse-ear cress).